The sequence spans 562 residues: Vacuolar basic amino acid transporter 1 (562 aa).

Topologically, residues Met-1–Asn-30 are vacuolar. A helical transmembrane segment spans residues Leu-31–Leu-51. Over Asp-52–Arg-100 the chain is Cytoplasmic. Residues Lys-101–Ala-121 traverse the membrane as a helical segment. The Vacuolar portion of the chain corresponds to Arg-122–Arg-131. N-linked (GlcNAc...) asparagine glycosylation occurs at Asn-123. A helical transmembrane segment spans residues Ala-132–Ile-152. The Cytoplasmic segment spans residues Cys-153–Asn-166. The helical transmembrane segment at Ile-167 to Ile-187 threads the bilayer. Topologically, residues Gly-188–Arg-190 are vacuolar. A helical membrane pass occupies residues Ala-191 to Ile-211. Residues Asn-212–Arg-232 lie on the Cytoplasmic side of the membrane. A helical membrane pass occupies residues Ile-233–Ser-253. The Vacuolar portion of the chain corresponds to Ser-254 to Gln-255. A helical membrane pass occupies residues Leu-256–Glu-276. Topologically, residues Arg-277–Arg-292 are cytoplasmic. A helical membrane pass occupies residues Ser-293–Phe-313. Residues Arg-314–Gly-331 lie on the Vacuolar side of the membrane. A glycan (N-linked (GlcNAc...) asparagine) is linked at Asn-324. Residues Leu-332–Leu-352 form a helical membrane-spanning segment. Residues Arg-353–Gln-365 lie on the Cytoplasmic side of the membrane. A helical membrane pass occupies residues Ile-366–Ser-386. The Vacuolar portion of the chain corresponds to His-387–Val-419. Residues Leu-420 to Val-440 form a helical membrane-spanning segment. The Cytoplasmic portion of the chain corresponds to Glu-441–Met-448. The chain crosses the membrane as a helical span at residues Thr-449–Val-469. Over Ser-470 to Lys-528 the chain is Vacuolar. N-linked (GlcNAc...) asparagine glycosylation occurs at Asn-504. The helical transmembrane segment at Ala-529–Leu-549 threads the bilayer. Topologically, residues Tyr-550 to Ser-562 are cytoplasmic.

Belongs to the major facilitator superfamily.

It is found in the vacuole membrane. In terms of biological role, transporter required for vacuolar uptake of at least histidine and lysine. This chain is Vacuolar basic amino acid transporter 1 (VBA1), found in Saccharomyces cerevisiae (strain ATCC 204508 / S288c) (Baker's yeast).